The sequence spans 257 residues: Zinc transporter ZupT (257 aa).

A run of 8 helical transmembrane segments spans residues 5–25 (LILTLLAGAATFIGAFLGVLG), 33–53 (LAFSLGFAAGIMLLISLMEML), 61–81 (GMSPVLGYGMFIIGLLGYFGL), 109–129 (AILLTLGISLHNFPEGIATFV), 137–157 (LGFGIALAVALHNIPEGLAVA), 171–191 (IFWAGISGMAEILGGVLAWLI), 195–215 (LVSPIVMAAIMAAVAGIMVAL), and 236–256 (GVLCGMSIMGLSLVILQTIGI). Residues asparagine 120 and glutamate 123 each contribute to the Fe(2+) site. 2 residues coordinate Zn(2+): glutamate 123 and histidine 148. Fe(2+) is bound by residues asparagine 149, glutamate 152, and glutamate 181. Glutamate 152 provides a ligand contact to Zn(2+).

The protein belongs to the ZIP transporter (TC 2.A.5) family. ZupT subfamily.

Its subcellular location is the cell inner membrane. The enzyme catalyses Zn(2+)(in) = Zn(2+)(out). Mediates zinc uptake. May also transport other divalent cations. This Salmonella paratyphi A (strain ATCC 9150 / SARB42) protein is Zinc transporter ZupT.